A 131-amino-acid polypeptide reads, in one-letter code: Large ribosomal subunit protein uL22 (131 aa).

This sequence belongs to the universal ribosomal protein uL22 family. As to quaternary structure, part of the 50S ribosomal subunit.

In terms of biological role, this protein binds specifically to 23S rRNA; its binding is stimulated by other ribosomal proteins, e.g. L4, L17, and L20. It is important during the early stages of 50S assembly. It makes multiple contacts with different domains of the 23S rRNA in the assembled 50S subunit and ribosome. Functionally, the globular domain of the protein is located near the polypeptide exit tunnel on the outside of the subunit, while an extended beta-hairpin is found that lines the wall of the exit tunnel in the center of the 70S ribosome. This Phytoplasma mali (strain AT) protein is Large ribosomal subunit protein uL22.